The following is a 513-amino-acid chain: Laccase (513 aa).

Plastocyanin-like domains lie at Pro-45–Phe-81, Lys-101–Lys-178, Trp-240–Asn-318, and Gln-378–Thr-509. Positions 105, 107, 153, and 155 each coordinate Cu cation. 8 residues coordinate Cu cation: His-419, His-422, His-424, His-491, Cys-492, His-493, His-497, and Met-502.

This sequence belongs to the multicopper oxidase family. In terms of assembly, monomer. It depends on Cu(2+) as a cofactor.

The protein resides in the spore coat. It carries out the reaction 4 hydroquinone + O2 = 4 benzosemiquinone + 2 H2O. The catalysed reaction is 2 (4Z,15Z)-bilirubin IXalpha + O2 = 2 biliverdin IXalpha + 2 H2O. Inhibited by azide. Multicopper oxidase that catalyzes the oxidation of a variety of substrates, including phenolic and non-phenolic compounds. Substrates include syringaldazine (SGZ), 2,6-dimethoxyphenol (2,6-DMP) and the non-phenolic compound 2,2'-azino-bis(3-ethylbenzothiazoline-6-sulfonic acid) (ABTS). Has no tyrosinase activity. Is implicated in the biosynthesis of a brownish pigment that characterizes sporulating colonies of B.subtilis, and which appears to be a melanin-like product and to confer protection against UV light. Functionally, in vitro, also shows strong bilirubin oxidase (BOD) activity, and can catalyze the oxidation of free bilirubin (UB), direct bilirubin (conjugated with glucuronic acid, DB) and ditaurobilirubin. The chain is Laccase from Bacillus subtilis (strain 168).